We begin with the raw amino-acid sequence, 312 residues long: Bifunctional pinoresinol-lariciresinol reductase 1 (312 aa).

NADP(+) is bound by residues 10 to 16 (GGTGYIG), R35, and K44. Residue K136 is the Proton acceptor of the active site. Residue R140 coordinates NADP(+). H268 contacts substrate.

This sequence belongs to the NmrA-type oxidoreductase family. Isoflavone reductase subfamily. Dimer. In terms of tissue distribution, expressed in seeds and roots, but not in stems. Detected in leaves.

It catalyses the reaction (-)-lariciresinol + NADP(+) = (-)-pinoresinol + NADPH + H(+). It carries out the reaction (+)-secoisolariciresinol + NADP(+) = (-)-lariciresinol + NADPH + H(+). Functionally, reductase involved in lignan biosynthesis. Catalyzes the enantioselective conversion of (-)-pinoresinol into (-)-lariciresinol and of (-)-lariciresinol into (+)-secoisolariciresinol. Abstracts the 4R-hydride from the NADPH cofactor during catalysis. The sequence is that of Bifunctional pinoresinol-lariciresinol reductase 1 (PLR_Lu1) from Linum usitatissimum (Flax).